The chain runs to 300 residues: F-box protein SKIP1 (300 aa).

The F-box; degenerate domain occupies 11-52; sequence LAPEILINIISRLTIQELWTGPMFVQKSWLTVCRDPYLWSIF.

As to quaternary structure, part of a SCF (ASK-cullin-F-box) protein ligase complex. Interacts with SKP1A/ASK1 and SKP1B/ASK2.

It localises to the nucleus. Its pathway is protein modification; protein ubiquitination. Functionally, component of SCF(ASK-cullin-F-box) E3 ubiquitin ligase complexes, which may mediate the ubiquitination and subsequent proteasomal degradation of target proteins. The polypeptide is F-box protein SKIP1 (SKIP1) (Arabidopsis thaliana (Mouse-ear cress)).